Reading from the N-terminus, the 327-residue chain is Methionyl-tRNA formyltransferase (327 aa).

113–116 provides a ligand contact to (6S)-5,6,7,8-tetrahydrofolate; the sequence is SILP.

It belongs to the Fmt family.

It catalyses the reaction L-methionyl-tRNA(fMet) + (6R)-10-formyltetrahydrofolate = N-formyl-L-methionyl-tRNA(fMet) + (6S)-5,6,7,8-tetrahydrofolate + H(+). Its function is as follows. Attaches a formyl group to the free amino group of methionyl-tRNA(fMet). The formyl group appears to play a dual role in the initiator identity of N-formylmethionyl-tRNA by promoting its recognition by IF2 and preventing the misappropriation of this tRNA by the elongation apparatus. This Colwellia psychrerythraea (strain 34H / ATCC BAA-681) (Vibrio psychroerythus) protein is Methionyl-tRNA formyltransferase.